A 102-amino-acid chain; its full sequence is Turripeptide OL55-like (102 aa).

Contains 8 disulfide bonds. Expressed by the venom duct.

It is found in the secreted. Acts as a neurotoxin by inhibiting an ion channel. The protein is Turripeptide OL55-like of Lophiotoma acuta (Marbled turris).